The sequence spans 321 residues: Ribosomal RNA small subunit methyltransferase H (321 aa).

Residues 40–42 (GGH), Asp-60, Phe-84, Asp-106, and Gln-113 each bind S-adenosyl-L-methionine.

The protein belongs to the methyltransferase superfamily. RsmH family.

Its subcellular location is the cytoplasm. It carries out the reaction cytidine(1402) in 16S rRNA + S-adenosyl-L-methionine = N(4)-methylcytidine(1402) in 16S rRNA + S-adenosyl-L-homocysteine + H(+). Specifically methylates the N4 position of cytidine in position 1402 (C1402) of 16S rRNA. This Haemophilus influenzae (strain PittEE) protein is Ribosomal RNA small subunit methyltransferase H.